The following is a 336-amino-acid chain: Dihydroorotate dehydrogenase (quinone) (336 aa).

FMN-binding positions include Ala-62–Lys-66 and Thr-86. Position 66 (Lys-66) interacts with substrate. Asn-111 to Phe-115 is a substrate binding site. Positions 139 and 172 each coordinate FMN. Asn-172 is a binding site for substrate. Ser-175 functions as the Nucleophile in the catalytic mechanism. Asn-177 contributes to the substrate binding site. Positions 217 and 245 each coordinate FMN. Substrate is bound at residue Asn-246–Thr-247. FMN-binding positions include Gly-268, Gly-297, and Tyr-318–Ser-319.

This sequence belongs to the dihydroorotate dehydrogenase family. Type 2 subfamily. Monomer. FMN is required as a cofactor.

The protein localises to the cell membrane. The enzyme catalyses (S)-dihydroorotate + a quinone = orotate + a quinol. It functions in the pathway pyrimidine metabolism; UMP biosynthesis via de novo pathway; orotate from (S)-dihydroorotate (quinone route): step 1/1. Functionally, catalyzes the conversion of dihydroorotate to orotate with quinone as electron acceptor. This is Dihydroorotate dehydrogenase (quinone) from Escherichia coli (strain UTI89 / UPEC).